Reading from the N-terminus, the 184-residue chain is ATP synthase subunit b (184 aa).

Residues 19-39 form a helical membrane-spanning segment; sequence IIVGVILVLLLTWLIAKAVVP.

The protein belongs to the ATPase B chain family. In terms of assembly, F-type ATPases have 2 components, F(1) - the catalytic core - and F(0) - the membrane proton channel. F(1) has five subunits: alpha(3), beta(3), gamma(1), delta(1), epsilon(1). F(0) has three main subunits: a(1), b(2) and c(10-14). The alpha and beta chains form an alternating ring which encloses part of the gamma chain. F(1) is attached to F(0) by a central stalk formed by the gamma and epsilon chains, while a peripheral stalk is formed by the delta and b chains.

Its subcellular location is the cell membrane. Its function is as follows. F(1)F(0) ATP synthase produces ATP from ADP in the presence of a proton or sodium gradient. F-type ATPases consist of two structural domains, F(1) containing the extramembraneous catalytic core and F(0) containing the membrane proton channel, linked together by a central stalk and a peripheral stalk. During catalysis, ATP synthesis in the catalytic domain of F(1) is coupled via a rotary mechanism of the central stalk subunits to proton translocation. Component of the F(0) channel, it forms part of the peripheral stalk, linking F(1) to F(0). The protein is ATP synthase subunit b of Cutibacterium acnes (strain DSM 16379 / KPA171202) (Propionibacterium acnes).